The sequence spans 341 residues: Holliday junction branch migration complex subunit RuvB (341 aa).

Residues 3-184 are large ATPase domain (RuvB-L); the sequence is DDFDIRDARM…FGINMHLEYY (182 aa). Residues L23, R24, G65, K68, T69, T70, 131–133, R174, Y184, and R221 contribute to the ATP site; that span reads EDY. T69 lines the Mg(2+) pocket. Residues 185 to 255 are small ATPAse domain (RuvB-S); that stretch reads DMETLTKIVL…IACFSLEALN (71 aa). Positions 258–341 are head domain (RuvB-H); that stretch reads RYGLDQIDNK…RVGEQGFLFD (84 aa). The DNA site is built by R313 and R318.

This sequence belongs to the RuvB family. Homohexamer. Forms an RuvA(8)-RuvB(12)-Holliday junction (HJ) complex. HJ DNA is sandwiched between 2 RuvA tetramers; dsDNA enters through RuvA and exits via RuvB. An RuvB hexamer assembles on each DNA strand where it exits the tetramer. Each RuvB hexamer is contacted by two RuvA subunits (via domain III) on 2 adjacent RuvB subunits; this complex drives branch migration. In the full resolvosome a probable DNA-RuvA(4)-RuvB(12)-RuvC(2) complex forms which resolves the HJ.

It is found in the cytoplasm. It catalyses the reaction ATP + H2O = ADP + phosphate + H(+). In terms of biological role, the RuvA-RuvB-RuvC complex processes Holliday junction (HJ) DNA during genetic recombination and DNA repair, while the RuvA-RuvB complex plays an important role in the rescue of blocked DNA replication forks via replication fork reversal (RFR). RuvA specifically binds to HJ cruciform DNA, conferring on it an open structure. The RuvB hexamer acts as an ATP-dependent pump, pulling dsDNA into and through the RuvAB complex. RuvB forms 2 homohexamers on either side of HJ DNA bound by 1 or 2 RuvA tetramers; 4 subunits per hexamer contact DNA at a time. Coordinated motions by a converter formed by DNA-disengaged RuvB subunits stimulates ATP hydrolysis and nucleotide exchange. Immobilization of the converter enables RuvB to convert the ATP-contained energy into a lever motion, pulling 2 nucleotides of DNA out of the RuvA tetramer per ATP hydrolyzed, thus driving DNA branch migration. The RuvB motors rotate together with the DNA substrate, which together with the progressing nucleotide cycle form the mechanistic basis for DNA recombination by continuous HJ branch migration. Branch migration allows RuvC to scan DNA until it finds its consensus sequence, where it cleaves and resolves cruciform DNA. This is Holliday junction branch migration complex subunit RuvB from Parabacteroides distasonis (strain ATCC 8503 / DSM 20701 / CIP 104284 / JCM 5825 / NCTC 11152).